The primary structure comprises 131 residues: Large ribosomal subunit protein eL32 (131 aa).

The tract at residues 39–77 (LGEKWRRPKGRHSKMRRKLKSKPKMPNPGYGSPKKVRGL) is disordered. The span at 44 to 61 (RRPKGRHSKMRRKLKSKP) shows a compositional bias: basic residues.

It belongs to the eukaryotic ribosomal protein eL32 family.

The sequence is that of Large ribosomal subunit protein eL32 (rpl32) from Methanopyrus kandleri (strain AV19 / DSM 6324 / JCM 9639 / NBRC 100938).